We begin with the raw amino-acid sequence, 378 residues long: UPF0754 membrane protein Bcer98_0694 (378 aa).

A helical membrane pass occupies residues 358-378 (LGALLGGTIGLMQGILLLFLM).

Belongs to the UPF0754 family.

It localises to the cell membrane. The protein is UPF0754 membrane protein Bcer98_0694 of Bacillus cytotoxicus (strain DSM 22905 / CIP 110041 / 391-98 / NVH 391-98).